We begin with the raw amino-acid sequence, 186 residues long: TATA-box-binding protein E (186 aa).

Tandem repeats lie at residues 10-86 (IENV…FDKL) and 101-179 (VQNI…TSRL).

It belongs to the TBP family.

Its function is as follows. General factor that plays a role in the activation of archaeal genes transcribed by RNA polymerase. Binds specifically to the TATA box promoter element which lies close to the position of transcription initiation. The chain is TATA-box-binding protein E (tbpE) from Halobacterium salinarum (strain ATCC 700922 / JCM 11081 / NRC-1) (Halobacterium halobium).